We begin with the raw amino-acid sequence, 27 residues long: Conotoxin Bt9.2 (27 aa).

3 cysteine pairs are disulfide-bonded: cysteine 2–cysteine 16, cysteine 6–cysteine 19, and cysteine 12–cysteine 24. Proline 13 is subject to 4-hydroxyproline.

As to expression, expressed by the venom duct.

It is found in the secreted. Probable neurotoxin that inhibits ion channels. The sequence is that of Conotoxin Bt9.2 from Conus betulinus (Beech cone).